A 142-amino-acid chain; its full sequence is Mitochondrial import receptor subunit TOM22 homolog (142 aa).

The span at 1–11 shows a compositional bias: low complexity; sequence MAAAVAAAGAG. Residues 1–40 form a disordered region; that stretch reads MAAAVAAAGAGEPLSPEELVPKAEAEKAEEDLEEDDDDEL. N-acetylalanine is present on alanine 2. Residues 2-82 are Cytoplasmic-facing; sequence AAAVAAAGAG…VAQKMYRFSR (81 aa). The residue at position 15 (serine 15) is a Phosphoserine. A compositionally biased stretch (acidic residues) spans 27–40; the sequence is KAEEDLEEDDDDEL. Positions 41–50 are import sequence; necessary for mitochondrion outer membrane localization and integration in the TOM complex; it reads DETLSERLWG. Threonine 43 is modified (phosphothreonine). Serine 45 bears the Phosphoserine mark. A helical membrane pass occupies residues 83–103; that stretch reads AALWIGTTSFMILVLPVVFET. The segment at 83–103 is TMD; necessary for mitochondrion outer membrane localization and integration in the TOM complex; it reads AALWIGTTSFMILVLPVVFET. Over 104-142 the chain is Mitochondrial intermembrane; the sequence is EKLQMEQQQQLQQRQILLGPNTGLSGGMPGALPPLPGKI. The segment at 123–142 is C-tail signal; necessary for mitochondrion outer membrane localization and integration in the TOM complex; the sequence is PNTGLSGGMPGALPPLPGKI.

It belongs to the Tom22 family. As to quaternary structure, forms part of the preprotein translocase complex of the outer mitochondrial membrane (TOM complex) which consists of at least 7 different proteins (TOMM5, TOMM6, TOMM7, TOMM20, TOMM22, TOMM40 and TOMM70). Interacts with TOMM40. Interacts with PPP2R2B.

Its subcellular location is the mitochondrion outer membrane. Functionally, central receptor component of the translocase of the outer membrane of mitochondria (TOM complex) responsible for the recognition and translocation of cytosolically synthesized mitochondrial preproteins. Together with the peripheral receptor TOM20 functions as the transit peptide receptor and facilitates the movement of preproteins into the translocation pore. Required for the translocation across the mitochondrial outer membrane of cytochrome P450 monooxygenases. This is Mitochondrial import receptor subunit TOM22 homolog (Tomm22) from Rattus norvegicus (Rat).